A 538-amino-acid chain; its full sequence is Chaperonin GroEL 1 (538 aa).

Residues 29–32 (TLGP), 86–90 (DGTTT), Gly-413, 478–480 (NAA), and Asp-494 contribute to the ATP site.

Belongs to the chaperonin (HSP60) family. As to quaternary structure, forms a cylinder of 14 subunits composed of two heptameric rings stacked back-to-back. Interacts with the co-chaperonin GroES.

It is found in the cytoplasm. It carries out the reaction ATP + H2O + a folded polypeptide = ADP + phosphate + an unfolded polypeptide.. In terms of biological role, together with its co-chaperonin GroES, plays an essential role in assisting protein folding. The GroEL-GroES system forms a nano-cage that allows encapsulation of the non-native substrate proteins and provides a physical environment optimized to promote and accelerate protein folding. This chain is Chaperonin GroEL 1, found in Corynebacterium glutamicum (strain R).